A 282-amino-acid polypeptide reads, in one-letter code: ATP phosphoribosyltransferase (282 aa).

Belongs to the ATP phosphoribosyltransferase family. Long subfamily. Mg(2+) is required as a cofactor.

It localises to the cytoplasm. The enzyme catalyses 1-(5-phospho-beta-D-ribosyl)-ATP + diphosphate = 5-phospho-alpha-D-ribose 1-diphosphate + ATP. It functions in the pathway amino-acid biosynthesis; L-histidine biosynthesis; L-histidine from 5-phospho-alpha-D-ribose 1-diphosphate: step 1/9. Its activity is regulated as follows. Feedback inhibited by histidine. Its function is as follows. Catalyzes the condensation of ATP and 5-phosphoribose 1-diphosphate to form N'-(5'-phosphoribosyl)-ATP (PR-ATP). Has a crucial role in the pathway because the rate of histidine biosynthesis seems to be controlled primarily by regulation of HisG enzymatic activity. The sequence is that of ATP phosphoribosyltransferase from Halobacterium salinarum (strain ATCC 29341 / DSM 671 / R1).